The primary structure comprises 195 residues: Imidazoleglycerol-phosphate dehydratase (195 aa).

This sequence belongs to the imidazoleglycerol-phosphate dehydratase family.

The protein localises to the cytoplasm. It carries out the reaction D-erythro-1-(imidazol-4-yl)glycerol 3-phosphate = 3-(imidazol-4-yl)-2-oxopropyl phosphate + H2O. Its pathway is amino-acid biosynthesis; L-histidine biosynthesis; L-histidine from 5-phospho-alpha-D-ribose 1-diphosphate: step 6/9. This chain is Imidazoleglycerol-phosphate dehydratase, found in Trichlorobacter lovleyi (strain ATCC BAA-1151 / DSM 17278 / SZ) (Geobacter lovleyi).